A 127-amino-acid chain; its full sequence is MSNRKPYVREVKRTWWKNHPFYRFYMLREATVLPLILFTIFLTFGLGSLVKGPEAWQGWLEFMANPIVVAINIVALLGSLFHAQTFFSMMPQVMPIRLKGKPVDKKIIVLTQWAAVAFISLIVLIVM.

The next 3 membrane-spanning stretches (helical) occupy residues Ala-30 to Val-50, Ile-67 to Phe-87, and Ile-107 to Met-127.

Belongs to the FrdC family. As to quaternary structure, part of an enzyme complex containing four subunits: a flavoprotein (FrdA), an iron-sulfur protein (FrdB), and two hydrophobic anchor proteins (FrdC and FrdD).

The protein localises to the cell inner membrane. Functionally, anchors the catalytic components of the fumarate reductase complex to the cell membrane, binds quinones. The polypeptide is Fumarate reductase subunit C (Vibrio campbellii (strain ATCC BAA-1116)).